The sequence spans 343 residues: Small ribosomal subunit biogenesis GTPase RsgA (343 aa).

One can recognise a CP-type G domain in the interval 116-275 (RGQLKPVAAN…LIDSPGIREF (160 aa)). GTP contacts are provided by residues 163–166 (NKAD) and 217–225 (GQSGVGKSS). Zn(2+)-binding residues include cysteine 299, cysteine 304, histidine 306, and cysteine 312.

Belongs to the TRAFAC class YlqF/YawG GTPase family. RsgA subfamily. As to quaternary structure, monomer. Associates with 30S ribosomal subunit, binds 16S rRNA. Zn(2+) serves as cofactor.

It is found in the cytoplasm. Functionally, one of several proteins that assist in the late maturation steps of the functional core of the 30S ribosomal subunit. Helps release RbfA from mature subunits. May play a role in the assembly of ribosomal proteins into the subunit. Circularly permuted GTPase that catalyzes slow GTP hydrolysis, GTPase activity is stimulated by the 30S ribosomal subunit. This is Small ribosomal subunit biogenesis GTPase RsgA from Azotobacter vinelandii (strain DJ / ATCC BAA-1303).